The following is a 220-amino-acid chain: MPGLTLGDVVPDLELDTTHGKIRLHDFVGDAYAIIFSHPADFTPVCTTELSEMAGYAGEFDKRGVKLLGFSCDDVESHKDWIKDIEAYKPGRRVGFPIVADPDREAIRQLNMIDADEKDTAGGELPNRALHIVGPDKKVKLSFLFPACTGRNMAEVLRATDALLTAARHRVATPVNWKPGERVVIPPGVSDEEAKARFPAGFETAQLPSNKCYLRFTQVD.

Residues 4–165 enclose the Thioredoxin domain; that stretch reads LTLGDVVPDL…VLRATDALLT (162 aa). The active-site Cysteine sulfenic acid (-SOH) intermediate is Cys-46. Positions 195–218 match the Bipartite nuclear localization signal motif; that stretch reads KARFPAGFETAQLPSNKCYLRFTQ.

The protein belongs to the peroxiredoxin family. Prx6 subfamily.

It is found in the nucleus. The protein resides in the cytoplasm. The catalysed reaction is a hydroperoxide + [thioredoxin]-dithiol = an alcohol + [thioredoxin]-disulfide + H2O. Thiol-specific peroxidase that catalyzes the reduction of hydrogen peroxide and organic hydroperoxides to water and alcohols, respectively. Seems to contribute to the inhibition of germination during stress. This is 1-Cys peroxiredoxin B from Oryza sativa subsp. indica (Rice).